The chain runs to 465 residues: Putative multidrug resistance protein MdtD (465 aa).

The next 13 helical transmembrane spans lie at 12 to 32 (LWIV…VNTA), 49 to 69 (SVIV…GWLA), 72 to 92 (IGVK…SLMC), 102 to 124 (ILSR…LTVM), 138 to 158 (FVTL…GFLV), 165 to 185 (WIFL…LLLM), 195 to 215 (FDIS…LALD), 219 to 239 (GLGL…IALG), 267 to 287 (LVGS…TPIF), 290 to 310 (IGLG…IIGS), 342 to 362 (LSLP…VLFF), 393 to 413 (LLSM…GILL), and 430 to 450 (SAFL…ALIF).

Belongs to the major facilitator superfamily. TCR/Tet family.

It localises to the cell inner membrane. The sequence is that of Putative multidrug resistance protein MdtD from Yersinia pseudotuberculosis serotype O:1b (strain IP 31758).